Consider the following 416-residue polypeptide: MNDYFRIKKIKGYQILDSRGNKTIRVKIETYGGISETGDAPAGASKGSREAIELRDKDGGVTRAVELVNTLINDSLRDFDVRNQLGIDQTLIRMDGTPNKSRVGGNTTIATSIAVAKTAAKAMGLEIFQYIGGPRVRYLPIPLLNILNGGLHAGNELKIQEFIIIPLSFDSFHEALYAADEVYKQLKGIITEKYGKLYTMLGDEGGVAPPLSKTEDALDLVYTAIKNSGYEDKIVMGIDAASSDFFNGSQYEIDGKKLSPDEMIDYYIQLASRYPLLYIEDPFNENDFERFSILQQKLKKTIVTGDDLFTTNIEYLKKGIEKSSAKGTIVKPNQIGTLSETFEYIEFAKKNSIKIIVSHRSGETEDSFIADLAVGVQSDFIKTGAPARGERTSKYNRLLEIENDYGIEYYGKKIYL.

Residue Gln160 participates in (2R)-2-phosphoglycerate binding. Residue Glu204 is the Proton donor of the active site. Residues Asp239, Glu280, and Asp306 each contribute to the Mg(2+) site. (2R)-2-phosphoglycerate is bound by residues Lys331, Arg360, Ser361, and Lys382. The Proton acceptor role is filled by Lys331.

It belongs to the enolase family. Mg(2+) is required as a cofactor.

The protein localises to the cytoplasm. It is found in the secreted. Its subcellular location is the cell surface. It catalyses the reaction (2R)-2-phosphoglycerate = phosphoenolpyruvate + H2O. The protein operates within carbohydrate degradation; glycolysis; pyruvate from D-glyceraldehyde 3-phosphate: step 4/5. In terms of biological role, catalyzes the reversible conversion of 2-phosphoglycerate (2-PG) into phosphoenolpyruvate (PEP). It is essential for the degradation of carbohydrates via glycolysis. The sequence is that of Enolase from Sulfurisphaera tokodaii (strain DSM 16993 / JCM 10545 / NBRC 100140 / 7) (Sulfolobus tokodaii).